Here is a 486-residue protein sequence, read N- to C-terminus: BTB/POZ domain and ankyrin repeat-containing protein NBCL (486 aa).

One can recognise a BTB domain in the interval 25-115; sequence SDVTFSVEGR…LYSGQVSIVP (91 aa). Residues 121–135 form a C2HC NPR-type zinc finger; it reads RPNCGERGCWHTHCS. Cys-124, Cys-129, His-131, and Cys-134 together coordinate Zn(2+). 4 ANK repeats span residues 257–286, 287–316, 321–350, and 354–388; these read QKIR…LNLD, EALA…DVNY, AGKT…DPNV, and DNVT…KLRL. Disordered regions lie at residues 403-441 and 464-486; these read EEGN…NNHN and QMSD…HHDY. 2 stretches are compositionally biased toward low complexity: residues 406 to 418 and 432 to 441; these read NANN…TTTT and SSSSSGNNHN. Residues 466 to 475 show a composition bias toward basic and acidic residues; it reads SDDHGGRHGD.

This sequence belongs to the plant 'ANKYRIN-BTB/POZ' family. 'NOOT-BOP-COCH-like' (NBCL) subfamily. In terms of assembly, homodimer.

Its subcellular location is the nucleus. The protein localises to the cytoplasm. It is found in the cell membrane. Its pathway is protein modification; protein ubiquitination. Its function is as follows. May act as a substrate-specific adapter of an E3 ubiquitin-protein ligase complex (CUL3-RBX1-BTB) which mediates the ubiquitination and subsequent proteasomal degradation of target proteins. Transcriptional co-regulator involved in the promotion of leaf and floral meristem fate and determinacy. Necessary for the development of stipules at the base of petioles. Required for the abscission of senescent organs, probably by regulating the cell wall disorganization in abscission zones (AZs, e.g. pulvini at the base of leaves). Promotes slightly root-cap border cells separation from the root tip. Involved in the coordination of the symbiotic nodule developmental program; promotes the formation of root nodules by interacting directly with APP1 to modulate the expression of the nuclear transcription factor Y subunit (NF-YA1), a key nodulin. Necessary for the robust maintenance of nodule identity throughout the nodule developmental program. The chain is BTB/POZ domain and ankyrin repeat-containing protein NBCL from Lupinus angustifolius (Narrow-leaved blue lupine).